Here is a 762-residue protein sequence, read N- to C-terminus: Endonuclease MutS2 (762 aa).

333–340 (GVNAGGKT) provides a ligand contact to ATP. In terms of domain architecture, Smr spans 688–762 (LDLRGQRSEE…GGSGVKIVKL (75 aa)).

Belongs to the DNA mismatch repair MutS family. MutS2 subfamily. In terms of assembly, homodimer. Binds to stalled ribosomes, contacting rRNA.

In terms of biological role, endonuclease that is involved in the suppression of homologous recombination and thus may have a key role in the control of bacterial genetic diversity. Acts as a ribosome collision sensor, splitting the ribosome into its 2 subunits. Detects stalled/collided 70S ribosomes which it binds and splits by an ATP-hydrolysis driven conformational change. Acts upstream of the ribosome quality control system (RQC), a ribosome-associated complex that mediates the extraction of incompletely synthesized nascent chains from stalled ribosomes and their subsequent degradation. Probably generates substrates for RQC. The sequence is that of Endonuclease MutS2 from Helicobacter pylori (strain J99 / ATCC 700824) (Campylobacter pylori J99).